Reading from the N-terminus, the 273-residue chain is Ethanolamine ammonia-lyase small subunit (273 aa).

V164, E185, and C214 together coordinate adenosylcob(III)alamin.

It belongs to the EutC family. In terms of assembly, the basic unit is a heterodimer which dimerizes to form tetramers. The heterotetramers trimerize; 6 large subunits form a core ring with 6 small subunits projecting outwards. Requires adenosylcob(III)alamin as cofactor.

The protein localises to the bacterial microcompartment. It catalyses the reaction ethanolamine = acetaldehyde + NH4(+). Its pathway is amine and polyamine degradation; ethanolamine degradation. In terms of biological role, catalyzes the deamination of various vicinal amino-alcohols to oxo compounds. Allows this organism to utilize ethanolamine as the sole source of nitrogen and carbon in the presence of external vitamin B12. The chain is Ethanolamine ammonia-lyase small subunit from Pseudomonas paraeruginosa (strain DSM 24068 / PA7) (Pseudomonas aeruginosa (strain PA7)).